A 360-amino-acid polypeptide reads, in one-letter code: Peptide chain release factor 1 (360 aa).

The residue at position 235 (Gln235) is an N5-methylglutamine.

Belongs to the prokaryotic/mitochondrial release factor family. Post-translationally, methylated by PrmC. Methylation increases the termination efficiency of RF1.

The protein localises to the cytoplasm. Its function is as follows. Peptide chain release factor 1 directs the termination of translation in response to the peptide chain termination codons UAG and UAA. This Burkholderia cenocepacia (strain HI2424) protein is Peptide chain release factor 1.